A 431-amino-acid chain; its full sequence is L-cysteine:1D-myo-inositol 2-amino-2-deoxy-alpha-D-glucopyranoside ligase (431 aa).

Cys-44 provides a ligand contact to Zn(2+). L-cysteinyl-5'-AMP-binding positions include 44 to 47 (CGIT), Thr-59, and 82 to 84 (NVT). Residues 46–56 (ITPYDATHLGH) carry the 'HIGH' region motif. Positions 187-192 (ERGGDP) match the 'ERGGDP' region motif. Residue Trp-227 coordinates L-cysteinyl-5'-AMP. A Zn(2+)-binding site is contributed by Cys-231. An L-cysteinyl-5'-AMP-binding site is contributed by 249–251 (GND). His-256 serves as a coordination point for Zn(2+). An L-cysteinyl-5'-AMP-binding site is contributed by Ile-283. The 'KMSKS' region motif lies at 289–293 (KMSKS).

The protein belongs to the class-I aminoacyl-tRNA synthetase family. MshC subfamily. In terms of assembly, monomer. Zn(2+) is required as a cofactor.

It carries out the reaction 1D-myo-inositol 2-amino-2-deoxy-alpha-D-glucopyranoside + L-cysteine + ATP = 1D-myo-inositol 2-(L-cysteinylamino)-2-deoxy-alpha-D-glucopyranoside + AMP + diphosphate + H(+). Catalyzes the ATP-dependent condensation of GlcN-Ins and L-cysteine to form L-Cys-GlcN-Ins. This chain is L-cysteine:1D-myo-inositol 2-amino-2-deoxy-alpha-D-glucopyranoside ligase, found in Stackebrandtia nassauensis (strain DSM 44728 / CIP 108903 / NRRL B-16338 / NBRC 102104 / LLR-40K-21).